The following is a 432-amino-acid chain: Crenactin (432 aa).

ATP contacts are provided by residues 20–24 (TSYVK), 182–184 (GGH), 235–239 (EVVKR), 354–358 (GAFSW), and Gln-399.

Belongs to the actin family. Monomer. The crenactin monomers polymerize into right-handed helical filaments, with 8 subunits per complete turn of the helix. Forms single-stranded filaments under high salt concentrations and double-stranded filaments under low salt concentrations. Interacts with arcadin-1 and arcadin-2.

Its subcellular location is the cytoplasm. The protein localises to the cytoskeleton. It catalyses the reaction ATP + H2O = ADP + phosphate + H(+). Its activity is regulated as follows. Crenactin polymerization is inhibited by interaction with arcadin-2. Also significantly inhibited by elevated antibiotic A22 concentrations. Its function is as follows. Forms the backbone of an actin-like archaeal cytoskeleton, which is involved in cell shape determination. Has ATPase activity. Shows highest activity towards ATP or GTP as nucleotide, and only residual activity on UTP, CTP and dNTPs. The chain is Crenactin from Pyrobaculum calidifontis (strain DSM 21063 / JCM 11548 / VA1).